We begin with the raw amino-acid sequence, 303 residues long: Hydroxyacylglutathione hydrolase, mitochondrial (303 aa).

Zn(2+) contacts are provided by His-97, His-99, Asp-101, His-102, His-153, and Asp-177. Residues 186–188 (KFF), 216–218 (HEY), and 292–295 (RKEK) each bind substrate. Residue His-216 participates in Zn(2+) binding.

Belongs to the metallo-beta-lactamase superfamily. Glyoxalase II family. In terms of assembly, monomer. Zn(2+) is required as a cofactor.

Its subcellular location is the mitochondrion matrix. The protein resides in the cytoplasm. The enzyme catalyses an S-(2-hydroxyacyl)glutathione + H2O = a 2-hydroxy carboxylate + glutathione + H(+). It carries out the reaction (R)-S-lactoylglutathione + H2O = (R)-lactate + glutathione + H(+). Thiolesterase that catalyzes the hydrolysis of S-D-lactoyl-glutathione to form glutathione and D-lactic acid. The sequence is that of Hydroxyacylglutathione hydrolase, mitochondrial (hagh) from Danio rerio (Zebrafish).